We begin with the raw amino-acid sequence, 263 residues long: HTH-type transcriptional regulator KdgR (263 aa).

The HTH iclR-type domain occupies 13–74 (VSSVLKVFGI…GESEKYSLTL (62 aa)). The H-T-H motif DNA-binding region spans 34–53 (ITELSQRVMMSKSTVYRFLQ). The IclR-ED domain occupies 89 to 258 (LIRSADIQMR…ARKISAQMGY (170 aa)).

It is found in the cytoplasm. In terms of biological role, transcriptional repressor that negatively regulates the expression of kdgT, kdgK and kdgA, which encode proteins involved in transport and catabolism of 2-keto-3-deoxygluconate (KDG). Also represses expression of eda, which encodes the Entner-Doudoroff aldolase, by binding to its P2 promoter region. The polypeptide is HTH-type transcriptional regulator KdgR (Escherichia coli (strain K12)).